The primary structure comprises 136 residues: Ribosome-binding factor A (136 aa).

The protein belongs to the RbfA family. As to quaternary structure, monomer. Binds 30S ribosomal subunits, but not 50S ribosomal subunits or 70S ribosomes.

The protein localises to the cytoplasm. Its function is as follows. One of several proteins that assist in the late maturation steps of the functional core of the 30S ribosomal subunit. Associates with free 30S ribosomal subunits (but not with 30S subunits that are part of 70S ribosomes or polysomes). Required for efficient processing of 16S rRNA. May interact with the 5'-terminal helix region of 16S rRNA. The chain is Ribosome-binding factor A from Rhodopseudomonas palustris (strain BisB5).